The following is a 565-amino-acid chain: Glycine--tRNA ligase (565 aa).

Substrate is bound by residues Arg-98 and Glu-164. ATP is bound by residues 196-198, 206-211, 323-324, and 440-443; these read RNE, IRLREF, EI, and GIDR. Position 211-215 (211-215) interacts with substrate; it reads FTQAE. Substrate is bound at residue 436-440; sequence EPSFG.

Belongs to the class-II aminoacyl-tRNA synthetase family.

The protein localises to the cytoplasm. The enzyme catalyses tRNA(Gly) + glycine + ATP = glycyl-tRNA(Gly) + AMP + diphosphate. In terms of biological role, catalyzes the attachment of glycine to tRNA(Gly). In Methanothermobacter thermautotrophicus (strain ATCC 29096 / DSM 1053 / JCM 10044 / NBRC 100330 / Delta H) (Methanobacterium thermoautotrophicum), this protein is Glycine--tRNA ligase.